A 596-amino-acid chain; its full sequence is SUN domain-containing protein 4 (596 aa).

The helical transmembrane segment at 28–48 (VSLSLVFLIWGLVFLSTLWIS) threads the bilayer. 2 disordered regions span residues 58–98 (LVDS…LSSD) and 139–158 (KQSE…TTGS). Acidic residues predominate over residues 66 to 77 (EPDDERADETAE). Polar residues-rich tracts occupy residues 80–95 (DATS…NPGL) and 141–158 (SEIN…TTGS). Residues 179–343 (SNSRDKSLSG…SLLEVYGVDA (165 aa)) enclose the SUN domain. Basic and acidic residues predominate over residues 366–396 (DTEQKEKKTMQAKESFESDEDKSKQKEKEQE). The disordered stretch occupies residues 366–410 (DTEQKEKKTMQAKESFESDEDKSKQKEKEQEASPENAVVKDEVSL). Residues 475 to 544 (ASKREKEVET…LERLEWMEKK (70 aa)) adopt a coiled-coil conformation. The next 2 helical transmembrane spans lie at 545–565 (GVVV…AVVF) and 576–596 (GGLA…ILSL).

Forms homomers and heteromers with SUN3. Interacts with SUN1, SUN2 and TIK.

It localises to the nucleus membrane. The protein localises to the endoplasmic reticulum membrane. In terms of biological role, encodes a member of the mid-SUN subfamily of SUN-domain proteins that is localized to both the nuclear envelope and the ER. It is involved in early seed development and nuclear morphology. [TAIR]. The sequence is that of SUN domain-containing protein 4 from Arabidopsis thaliana (Mouse-ear cress).